A 20-amino-acid chain; its full sequence is Pregnancy-associated glycoprotein 60H (20 aa).

An N-linked (GlcNAc...) asparagine glycan is attached at N4.

This sequence belongs to the peptidase A1 family. Chorionic epithelium (trophectoderm) and placental cotyledons.

It is found in the secreted. Its subcellular location is the extracellular space. This chain is Pregnancy-associated glycoprotein 60H, found in Bison bonasus (European bison).